The sequence spans 219 residues: uncharacterized protein (219 aa).

S23 is subject to Phosphoserine. A Glycyl lysine isopeptide (Lys-Gly) (interchain with G-Cter in SUMO) cross-link involves residue K137.

It is found in the cytoplasm. This is an uncharacterized protein from Saccharomyces cerevisiae (strain ATCC 204508 / S288c) (Baker's yeast).